The primary structure comprises 223 residues: Thymidine kinase (223 aa).

ATP-binding positions include 19–26 (GPMFAGKT) and 96–99 (DEVQ). E97 acts as the Proton acceptor in catalysis. Zn(2+) contacts are provided by C153, C156, C191, and H194.

This sequence belongs to the thymidine kinase family. Homotetramer.

It localises to the cytoplasm. It catalyses the reaction thymidine + ATP = dTMP + ADP + H(+). This is Thymidine kinase from Ureaplasma parvum serovar 3 (strain ATCC 27815 / 27 / NCTC 11736).